A 111-amino-acid polypeptide reads, in one-letter code: MKTLLLALVVVAFMCLGSADQLGLGSQRIDWEQGQAIGPPHGLCVQCDRKTCKNCFKSERCQPYNRICYTLYKPDENGEMKWAVKGCAKTCPSAKPGERVKCCSSPRCNEV.

An N-terminal signal peptide occupies residues M1–A19. The propeptide occupies D20–G34. Position 35 is a pyrrolidone carboxylic acid (Q35). 5 disulfides stabilise this stretch: C44-C68, C47-C55, C61-C87, C91-C102, and C103-C108.

It belongs to the three-finger toxin family. Ancestral subfamily. Boigatoxin sub-subfamily. As to expression, expressed by the venom gland.

It localises to the secreted. Functionally, potent postsynaptic neurotoxin. Displays readily reversible competitive antagonism at the nicotinic acetylcholine receptor (nAChR). The protein is Toxin 3FTx-Tel4 of Telescopus dhara (Egyptian catsnake).